Here is a 488-residue protein sequence, read N- to C-terminus: GTPase Der (488 aa).

2 EngA-type G domains span residues 3–166 (PVVA…AEAM) and 199–372 (IKLA…DSAT). Residues 9–16 (GRPNVGKS), 56–60 (DTGGI), 118–121 (NKVD), 205–212 (GKPNVGKS), 252–256 (DTAGV), and 317–320 (NKWD) each bind GTP. The 85-residue stretch at 373–457 (RRVSTSMLTR…PIQLRFQEGD (85 aa)) folds into the KH-like domain. The disordered stretch occupies residues 469 to 488 (MSQERRRKRALSHIKDRKTK). Residues 473 to 488 (RRRKRALSHIKDRKTK) are compositionally biased toward basic residues.

It belongs to the TRAFAC class TrmE-Era-EngA-EngB-Septin-like GTPase superfamily. EngA (Der) GTPase family. As to quaternary structure, associates with the 50S ribosomal subunit.

In terms of biological role, GTPase that plays an essential role in the late steps of ribosome biogenesis. The polypeptide is GTPase Der (Shewanella putrefaciens (strain CN-32 / ATCC BAA-453)).